The primary structure comprises 423 residues: uncharacterized protein (423 aa).

A BON domain is found at 75-145 (LHVVVTQPIA…PIVNNIKVAG (71 aa)).

The protein belongs to the bacterial secretin family.

Functionally, involved in the secretion of an unknown compound. This is an uncharacterized protein from Sinorhizobium fredii (strain NBRC 101917 / NGR234).